Consider the following 219-residue polypeptide: Elongation factor Ts (219 aa).

The segment at 81–84 (SDFV) is involved in Mg(2+) ion dislocation from EF-Tu.

Belongs to the EF-Ts family.

It is found in the cytoplasm. In terms of biological role, associates with the EF-Tu.GDP complex and induces the exchange of GDP to GTP. It remains bound to the aminoacyl-tRNA.EF-Tu.GTP complex up to the GTP hydrolysis stage on the ribosome. This Koribacter versatilis (strain Ellin345) protein is Elongation factor Ts.